Consider the following 234-residue polypeptide: Small ribosomal subunit protein eS4 (234 aa).

One can recognise an S4 RNA-binding domain in the interval 39 to 102; that stretch reads MPLVVVLRDL…NANYRVVIGM (64 aa).

Belongs to the eukaryotic ribosomal protein eS4 family.

In Methanocella arvoryzae (strain DSM 22066 / NBRC 105507 / MRE50), this protein is Small ribosomal subunit protein eS4.